The following is a 341-amino-acid chain: Protein BIG GRAIN 1-like C (341 aa).

Disordered regions lie at residues 28-61 (DGLQSDLKGSINENVSSSSSSPSPNKKDDKLTTL) and 76-138 (SSTT…SDDD). Residues 52–61 (NKKDDKLTTL) show a composition bias toward basic and acidic residues. Positions 76 to 92 (SSTTTTNSSDSSSFSSS) are enriched in low complexity. The segment covering 105–138 (KLAEQGKRSGDERQRTKRTVMDNDSRLFSKSDDD) has biased composition (basic and acidic residues).

The protein belongs to the BIG GRAIN 1 (BG1) plant protein family.

The protein localises to the cell membrane. Its function is as follows. Involved in auxin transport. Regulator of the auxin signaling pathway. This chain is Protein BIG GRAIN 1-like C, found in Arabidopsis thaliana (Mouse-ear cress).